A 500-amino-acid polypeptide reads, in one-letter code: Cytochrome P450 2D26 (500 aa).

A Phosphoserine modification is found at Ser-249. Residue Cys-446 participates in heme binding.

It belongs to the cytochrome P450 family. Requires heme as cofactor.

Its subcellular location is the endoplasmic reticulum membrane. It localises to the microsome membrane. It catalyses the reaction an organic molecule + reduced [NADPH--hemoprotein reductase] + O2 = an alcohol + oxidized [NADPH--hemoprotein reductase] + H2O + H(+). In terms of biological role, cytochromes P450 are a group of heme-thiolate monooxygenases. In liver microsomes, this enzyme is involved in an NADPH-dependent electron transport pathway. It oxidizes a variety of structurally unrelated compounds, including steroids, fatty acids, and xenobiotics. The sequence is that of Cytochrome P450 2D26 from Mus musculus (Mouse).